The sequence spans 713 residues: Early transcription factor 82 kDa subunit (713 aa).

This sequence belongs to the poxviridae VETF large subunit family. Heterodimer of a 70 kDa and a 82 kDa subunit. Part of the early transcription complex composed of ETF, RAP94, and the DNA-directed RNA polymerase.

Acts with RNA polymerase to initiate transcription from early gene promoters. Is recruited by the RPO-associated protein of 94 kDa (RAP94) to form the early transcription complex, which also contains the core RNA polymerase. ETF heterodimer binds to early gene promoters. The polypeptide is Early transcription factor 82 kDa subunit (VETFL) (Yaba monkey tumor virus (strain VR587) (YMTV)).